Here is a 585-residue protein sequence, read N- to C-terminus: Probable inactive serine/threonine-protein kinase slob1 (585 aa).

The FYVE-type zinc-finger motif lies at 21 to 82 (DQSSLECNDC…LCRSCNNSFE (62 aa)). Positions 27, 30, 43, 46, 51, 54, 74, and 77 each coordinate Zn(2+). Residues 108-478 (SKPLQDIGHT…STSLLNNSFN (371 aa)) form the Protein kinase domain. Composition is skewed to low complexity over residues 426-456 (ISKL…NISS) and 466-503 (LPSS…ISSP). Residues 426–585 (ISKLSSSSSN…SLKPSSTKKK (160 aa)) are disordered. The span at 513-532 (TPPPPPPPPKSAPPPPPPPS) shows a compositional bias: pro residues. Low complexity predominate over residues 533–542 (SSKLPPSSSS). The 21-residue stretch at 542 to 562 (SRNSLLESIRNADNAKKLKKT) folds into the WH2 domain.

Belongs to the protein kinase superfamily. Ser/Thr protein kinase family.

This chain is Probable inactive serine/threonine-protein kinase slob1 (slob1), found in Dictyostelium discoideum (Social amoeba).